We begin with the raw amino-acid sequence, 975 residues long: Glycine dehydrogenase (decarboxylating) (975 aa).

Position 723 is an N6-(pyridoxal phosphate)lysine (lysine 723).

This sequence belongs to the GcvP family. In terms of assembly, the glycine cleavage system is composed of four proteins: P, T, L and H. Pyridoxal 5'-phosphate serves as cofactor.

The catalysed reaction is N(6)-[(R)-lipoyl]-L-lysyl-[glycine-cleavage complex H protein] + glycine + H(+) = N(6)-[(R)-S(8)-aminomethyldihydrolipoyl]-L-lysyl-[glycine-cleavage complex H protein] + CO2. Its function is as follows. The glycine cleavage system catalyzes the degradation of glycine. The P protein binds the alpha-amino group of glycine through its pyridoxal phosphate cofactor; CO(2) is released and the remaining methylamine moiety is then transferred to the lipoamide cofactor of the H protein. This chain is Glycine dehydrogenase (decarboxylating), found in Burkholderia mallei (strain NCTC 10247).